A 582-amino-acid polypeptide reads, in one-letter code: Beta-glucosidase 28 (582 aa).

A signal peptide spans 1–21 (MKMHFFILLVITSWLSEKITS). A beta-D-glucoside is bound by residues Q48, H151, and 196-197 (NE). E197 acts as the Proton donor in catalysis. An intrachain disulfide couples C216 to C224. N255 and N330 each carry an N-linked (GlcNAc...) asparagine glycan. Y340 is an a beta-D-glucoside binding site. N-linked (GlcNAc...) asparagine glycosylation is present at N370. E412 provides a ligand contact to a beta-D-glucoside. Residue E412 is the Nucleophile of the active site. N430 is a glycosylation site (N-linked (GlcNAc...) asparagine). Residues W462, 469-470 (EW), and F478 each bind a beta-D-glucoside. N521 and N544 each carry an N-linked (GlcNAc...) asparagine glycan.

It belongs to the glycosyl hydrolase 1 family.

The catalysed reaction is Hydrolysis of terminal, non-reducing beta-D-glucosyl residues with release of beta-D-glucose.. The polypeptide is Beta-glucosidase 28 (Arabidopsis thaliana (Mouse-ear cress)).